The chain runs to 715 residues: Fatty acid oxidation complex subunit alpha (715 aa).

Residues 1 to 189 (MIYQGETLTV…KVGAIDAVVA (189 aa)) are enoyl-CoA hydratase/isomerase. A substrate-binding site is contributed by aspartate 296. The interval 311-715 (AKATSHAAVL…EMAAQGKTFY (405 aa)) is 3-hydroxyacyl-CoA dehydrogenase. NAD(+)-binding positions include methionine 325, aspartate 344, 401–403 (VVE), lysine 408, and serine 430. Catalysis depends on histidine 451, which acts as the For 3-hydroxyacyl-CoA dehydrogenase activity. An NAD(+)-binding site is contributed by asparagine 454. Residues asparagine 501 and tyrosine 661 each coordinate substrate.

It in the N-terminal section; belongs to the enoyl-CoA hydratase/isomerase family. The protein in the C-terminal section; belongs to the 3-hydroxyacyl-CoA dehydrogenase family. Heterotetramer of two alpha chains (FadB) and two beta chains (FadA).

The catalysed reaction is a (3S)-3-hydroxyacyl-CoA + NAD(+) = a 3-oxoacyl-CoA + NADH + H(+). It carries out the reaction a (3S)-3-hydroxyacyl-CoA = a (2E)-enoyl-CoA + H2O. The enzyme catalyses a 4-saturated-(3S)-3-hydroxyacyl-CoA = a (3E)-enoyl-CoA + H2O. It catalyses the reaction (3S)-3-hydroxybutanoyl-CoA = (3R)-3-hydroxybutanoyl-CoA. The catalysed reaction is a (3Z)-enoyl-CoA = a 4-saturated (2E)-enoyl-CoA. It carries out the reaction a (3E)-enoyl-CoA = a 4-saturated (2E)-enoyl-CoA. It functions in the pathway lipid metabolism; fatty acid beta-oxidation. In terms of biological role, involved in the aerobic and anaerobic degradation of long-chain fatty acids via beta-oxidation cycle. Catalyzes the formation of 3-oxoacyl-CoA from enoyl-CoA via L-3-hydroxyacyl-CoA. It can also use D-3-hydroxyacyl-CoA and cis-3-enoyl-CoA as substrate. The protein is Fatty acid oxidation complex subunit alpha of Aeromonas hydrophila subsp. hydrophila (strain ATCC 7966 / DSM 30187 / BCRC 13018 / CCUG 14551 / JCM 1027 / KCTC 2358 / NCIMB 9240 / NCTC 8049).